Consider the following 219-residue polypeptide: Pyridoxine/pyridoxamine 5'-phosphate oxidase (219 aa).

Residues 15-18 and Lys73 each bind substrate; that span reads RRDY. Residues 68–73, 83–84, Arg89, Lys90, and Gln112 each bind FMN; these read RMVLLK and YT. Substrate is bound by residues Tyr130, Arg134, and Ser138. Residues 147 to 148 and Trp192 contribute to the FMN site; that span reads QS. 198-200 provides a ligand contact to substrate; that stretch reads RLH. Arg202 is a binding site for FMN.

Belongs to the pyridoxamine 5'-phosphate oxidase family. As to quaternary structure, homodimer. FMN serves as cofactor.

The catalysed reaction is pyridoxamine 5'-phosphate + O2 + H2O = pyridoxal 5'-phosphate + H2O2 + NH4(+). It catalyses the reaction pyridoxine 5'-phosphate + O2 = pyridoxal 5'-phosphate + H2O2. It participates in cofactor metabolism; pyridoxal 5'-phosphate salvage; pyridoxal 5'-phosphate from pyridoxamine 5'-phosphate: step 1/1. Its pathway is cofactor metabolism; pyridoxal 5'-phosphate salvage; pyridoxal 5'-phosphate from pyridoxine 5'-phosphate: step 1/1. In terms of biological role, catalyzes the oxidation of either pyridoxine 5'-phosphate (PNP) or pyridoxamine 5'-phosphate (PMP) into pyridoxal 5'-phosphate (PLP). This chain is Pyridoxine/pyridoxamine 5'-phosphate oxidase, found in Acaryochloris marina (strain MBIC 11017).